Consider the following 1958-residue polypeptide: MADRTAPRCQLRLEWVYGYRGHQCRNNLYYTAGKEVVYFVAGVGVVYNTREHSQKFFLGHNDDIISLALHPDKTLIATGQVGKEPYICIWNSYNVHTVSILKDVHTHGVACLAFDSDGQHLASVGLDAKNTVCIWDWRKGKLLASATGHSDRIFDISWDPYQPNRMVSCGVKHIKFWTLCGNALTAKRGIFGKTGDLQTILCLACAKEDITYSGALNGDIYVWKGLTLVRTIQGAHSAGIFSLYACEEGFATGGRDGCIRLWDTDFKPITKIDLRETEQGYKGLSIRSVCWKADRLLAGTQDSEIFEVIVRERDKPMLILQGHCEGELWALALHPKKPLAVTGSDDRSVRLWSLADHALIARCNMEEAVRSVSFSPDGSQLALGMKDGSFIVLRVRDMTEVVHIKDRKEVIHEMKFSPDGSYLAVGSNDGPVDVYAVAQRYKKIGECNKSLSFITHIDWSLDSKYLQTNDGAGERLFYKMPSGKPLTSKEEIKGIPWASWTCVRGPEVSGIWPKYTEVIDINSVDANYNSSVLVSGDDFGLVKLFKFPCLKKGAKFRKYVGHSAHVTNVRWSHDFQWVLSTGGADHSVFQWRFIPEAVSNGVLETTPQEGGADSYSEESDSDFSDVPELDSDIEQETQINYDRQVYKEDLPQLKQQSKEKNHAVPFLKREKAPEDSLKLQFIHGYRGYDCRNNLFYTQAGEVVYHIAAVAVVYNRQQHAQRLYLGHDDDILSLTIHPVKDYVATGQVGRDAAVHVWDTQTLKCLSLLKGHHQRGVCALDFSADGKCLVSVGLDDFHSVVFWDWKKGEKIATTRGHKDKIFVVKCNPQHADKLVTVGIKHIKFWQQAGGGFTSKRGSFGSAGKLETMMCVSYGRMEDLVFSGAATGDIFIWKDVLLLKTVKAHDGPVFAMYALDKGFVTGGKDGIVELWDDMFERCLKTYAIKRTALSTSSKGLLLEDNPSIRAITLGHGHILVGTKNGEILEIDKSGPMTLLVQGHMEGEVWGLAAHPLLPICATVSDDKTLRIWELSSQHRMLAVRKLKKGGRCCAFSPDGKALAVGLNDGSFLVVNADTVEDMLSFHHRKEMISDIKFSKDTGKYLAVASHDNFVDIYNVLTSKRVGICKGASSYITHIDWDSRGKLLQVNSGAKEQLFFEAPRGRKHTIRPSEAEKIEWDTWTCVLGPTCEGIWPAHSDVTDVNAANLTKDGSLLATGDDFGFVKLFSYPVKGQHARFKKYVGHSAHVTNVRWLHNDSVLLTVGGADTALMIWTREFVGTQESKLVDSEESDTDAEEDGGYDSDVAREKAIDYTTKIYAVSIREMEGTKPHQQLKEVSMEERPPVSRAAPQPEKLQKNNITKKKKLVEELALDHVFGYRGFDCRNNLHYLNDGADIIFHTAAAGIVQNLSTGSQSFYLEHTDDILCLTVNQHPKYRNVVATSQIGTTPSIHIWDAMTKHTLSMLRCFHTKGVNYINFSATGKLLVSVGVDPEHTITVWRWQEGTKVASRGGHLERIFVVEFRPDSDTQFVSVGVKHMKFWTLAGSALLYKKGVIGSMEAAKMQTMLSVAFGANNLTFTGAINGDVYVWKEHFLIRLVAKAHTGPVFTMYTTLRDGLIVTGGKERPTKEGGAVKLWDQEMKRCRAFQLETGQLVECVRSVCRGKGKILVGTKDGEIIEVGEKSAASNILIDGHMEGEIWGLATHPSKDMFISASNDGTARIWDLADKKLLNKVNLGHAARCAAYSPDGEMVAIGMKNGEFVILLVNTLKVWGKKRDRKSAIQDIRISPDNRFLAVGSSEQTVDFYDLTQGTSLNRIGYCKDIPSFVIQMDFSADSKYIQVSTGAYKRQVHEVPLGKQVTEAMVVEKITWASWTSVLGDEVIGIWPRNADKADVNCACVTHAGLNIVTGDDFGLLKLFDFPCTEKFAKHKRYFGHSAHVTNIRFSSDDKYVVSTGGDDCSVFVWRCL.

WD repeat units lie at residues 59 to 100 (GHND…TVSI), 104 to 145 (VHTH…LLAS), 148 to 187 (GHSD…LTAK), 195 to 233 (GDLQ…RTIQ), 235 to 273 (AHSA…TKID), 280 to 321 (GYKG…LILQ), 323 to 362 (HCEG…LIAR), 364 to 403 (NMEE…EVVH), 406 to 445 (DRKE…KKIG), and 561 to 601 (GHSA…VSNG). A disordered region spans residues 604–627 (ETTPQEGGADSYSEESDSDFSDVP). The span at 615–627 (YSEESDSDFSDVP) shows a compositional bias: acidic residues. WD repeat units follow at residues 725 to 766 (GHDD…CLSL), 770 to 811 (HHQR…KIAT), 814 to 853 (GHKD…FTSK), 861 to 900 (GKLE…KTVK), 901 to 940 (AHDG…KTYA), 996 to 1035 (HMEG…RMLA), 1038 to 1077 (KLKK…DMLS), 1080 to 1120 (HRKE…RVGI), 1191 to 1230 (SDVT…QHAR), and 1236 to 1276 (GHSA…TQES). The segment covering 1322-1337 (KPHQQLKEVSMEERPP) has biased composition (basic and acidic residues). Residues 1322-1352 (KPHQQLKEVSMEERPPVSRAAPQPEKLQKNN) form a disordered region. 10 WD repeats span residues 1412-1456 (EHTD…TLSM), 1460-1501 (FHTK…KVAS), 1504-1543 (GHLE…LLYK), 1553-1591 (AKMQ…RLVA), 1593-1638 (AHTG…CRAF), 1685-1724 (HMEG…LLNK), 1726-1767 (NLGH…GKKR), 1768-1807 (DRKS…SLNR), 1880-1919 (ADKA…KFAK), and 1925-1958 (GHSA…WRCL).

This sequence belongs to the WD repeat EMAP family.

The protein localises to the cytoplasm. The protein resides in the cytoskeleton. In terms of biological role, may modify the assembly dynamics of microtubules, such that microtubules are slightly longer, but more dynamic. This Mus musculus (Mouse) protein is Echinoderm microtubule-associated protein-like 6 (Eml6).